Here is a 389-residue protein sequence, read N- to C-terminus: Flavin-dependent monooxygenase (389 aa).

FAD-binding positions include 12–15 (AGVA), 34–35 (EK), Q44, R105, Y267, and D289.

It belongs to the aromatic-ring hydroxylase family. FAD is required as a cofactor.

It carries out the reaction a tetracycline + NADPH + O2 + H(+) = a (1S,10aS)-3-(CONH2)-1-(Me2N)-3,3a,4,6-(HO)4-2,5-dioxo-1H,10aH,11H,11aH-cyclopenta[b]anthracene + CO + NADP(+) + H2O. It catalyses the reaction 7-chlorotetracycline + NADPH + O2 + H(+) = (1S,10S,10aS)-3-(CONH2)-9-Cl-1-(Me2N)-3,3a,4,10-(HO)4-10-Me-2,5-dioxo-1H,10aH,11H,11aH-cyclopenta[b]anthracen-6-olate + CO + NADP(+) + H2O. Its activity is regulated as follows. Inhibited by anhydrotetracycline. Its function is as follows. An FAD-requiring monooxygenase active on tetracycline antibiotic and some of its derivatives, which leads to their inactivation. Expression in E.coli confers high resistance to tetracycline and oxytetracycline, does not confer resistance to minocycline or tigecycline. The reaction requires NADPH. Expression in L.pneumophila confers resistance to tetracycline. Degrades and confers resistance to tetracycline and chlortetracycline. The sequence is that of Flavin-dependent monooxygenase (tet(56)) from Legionella longbeachae serogroup 1 (strain NSW150).